The following is an 878-amino-acid chain: Aminopeptidase M1-A (878 aa).

Residues 105–212 form a required for membrane association region; it reads VGEGTLVIAF…MSTYLVAVIV (108 aa). Substrate contacts are provided by residues Glu145 and 278-282; that span reads GAMEN. His314 lines the Zn(2+) pocket. The active-site Proton acceptor is Glu315. His318 and Glu337 together coordinate Zn(2+). Residues 727–728 carry the Dileucine internalization motif motif; the sequence is LL.

It belongs to the peptidase M1 family. Homodimer. Zn(2+) is required as a cofactor.

Its subcellular location is the membrane. The protein resides in the microsome membrane. It localises to the cytoplasm. The enzyme catalyses Release of an N-terminal amino acid, Xaa-|-Yaa- from a peptide, amide or arylamide. Xaa is preferably Ala, but may be most amino acids including Pro (slow action). When a terminal hydrophobic residue is followed by a prolyl residue, the two may be released as an intact Xaa-Pro dipeptide.. This is Aminopeptidase M1-A from Oryza sativa subsp. japonica (Rice).